A 291-amino-acid polypeptide reads, in one-letter code: MSTVLRFGIPKGSLEEATVDLFKQAGWQIGISSRSYFPTVDDGEMKCHLIRPQEMGKYVERGTIDVGIAGRDWIRENDSDVVEVCEMVYSKVSRRPVRWVLVVAQDSPVQGPEDLQGATISTELVEFTKRYFKERNIQVNVEFSWGATEAKVVDGLCDAIVEVTETGSTIRANNLRIVCDLMESVPVMVANKAAWEDPWKRAKIEQIATLLNSALRAEGMVGLKLNAPAEKVEAITGILPSQKAPTVAHLYKSDWVSIESILPEKEVRRIVPELLRLGAEGIIEYPLSKII.

Belongs to the ATP phosphoribosyltransferase family. Long subfamily. Mg(2+) is required as a cofactor.

The protein resides in the cytoplasm. The enzyme catalyses 1-(5-phospho-beta-D-ribosyl)-ATP + diphosphate = 5-phospho-alpha-D-ribose 1-diphosphate + ATP. It functions in the pathway amino-acid biosynthesis; L-histidine biosynthesis; L-histidine from 5-phospho-alpha-D-ribose 1-diphosphate: step 1/9. With respect to regulation, feedback inhibited by histidine. Functionally, catalyzes the condensation of ATP and 5-phosphoribose 1-diphosphate to form N'-(5'-phosphoribosyl)-ATP (PR-ATP). Has a crucial role in the pathway because the rate of histidine biosynthesis seems to be controlled primarily by regulation of HisG enzymatic activity. The polypeptide is ATP phosphoribosyltransferase (Trichlorobacter lovleyi (strain ATCC BAA-1151 / DSM 17278 / SZ) (Geobacter lovleyi)).